A 399-amino-acid polypeptide reads, in one-letter code: Bifunctional enzyme IspD/IspF (399 aa).

The 2-C-methyl-D-erythritol 4-phosphate cytidylyltransferase stretch occupies residues 1 to 239 (MHTWALLLAA…SSEKKNMQVP (239 aa)). The 2-C-methyl-D-erythritol 2,4-cyclodiphosphate synthase stretch occupies residues 240-399 (CVGWGYDVHR…AVTALRRVSS (160 aa)). A divalent metal cation-binding residues include Asp-246 and His-248. Residues 246–248 (DVH) and 273–274 (HS) each bind 4-CDP-2-C-methyl-D-erythritol 2-phosphate. Position 281 (His-281) interacts with a divalent metal cation. 4-CDP-2-C-methyl-D-erythritol 2-phosphate contacts are provided by residues 295-297 (DIG), 300-304 (FPDTD), 371-374 (TTEE), and Phe-378.

It in the N-terminal section; belongs to the IspD/TarI cytidylyltransferase family. IspD subfamily. In the C-terminal section; belongs to the IspF family. Requires a divalent metal cation as cofactor.

The catalysed reaction is 2-C-methyl-D-erythritol 4-phosphate + CTP + H(+) = 4-CDP-2-C-methyl-D-erythritol + diphosphate. It catalyses the reaction 4-CDP-2-C-methyl-D-erythritol 2-phosphate = 2-C-methyl-D-erythritol 2,4-cyclic diphosphate + CMP. Its pathway is isoprenoid biosynthesis; isopentenyl diphosphate biosynthesis via DXP pathway; isopentenyl diphosphate from 1-deoxy-D-xylulose 5-phosphate: step 2/6. It participates in isoprenoid biosynthesis; isopentenyl diphosphate biosynthesis via DXP pathway; isopentenyl diphosphate from 1-deoxy-D-xylulose 5-phosphate: step 4/6. Functionally, bifunctional enzyme that catalyzes the formation of 4-diphosphocytidyl-2-C-methyl-D-erythritol from CTP and 2-C-methyl-D-erythritol 4-phosphate (MEP) (IspD), and catalyzes the conversion of 4-diphosphocytidyl-2-C-methyl-D-erythritol 2-phosphate (CDP-ME2P) to 2-C-methyl-D-erythritol 2,4-cyclodiphosphate (ME-CPP) with a corresponding release of cytidine 5-monophosphate (CMP) (IspF). The chain is Bifunctional enzyme IspD/IspF from Oleidesulfovibrio alaskensis (strain ATCC BAA-1058 / DSM 17464 / G20) (Desulfovibrio alaskensis).